The primary structure comprises 308 residues: Transcription initiation factor IIB (308 aa).

2 repeat units span residues 124 to 207 (NELE…LREL) and 218 to 299 (DYVT…ELTQ).

It belongs to the TFIIB family.

Stabilizes TBP binding to an archaeal box-A promoter. Also responsible for recruiting RNA polymerase II to the pre-initiation complex (DNA-TBP-TFIIB). The protein is Transcription initiation factor IIB of Sulfurisphaera tokodaii (strain DSM 16993 / JCM 10545 / NBRC 100140 / 7) (Sulfolobus tokodaii).